A 69-amino-acid polypeptide reads, in one-letter code: MRIFYYLHFLCYVTFILPATCTLVNADRCTKRYGRCKRDCLESEKQIDICSLPRKICCTEKLYEEDDMF.

The N-terminal stretch at 1–26 (MRIFYYLHFLCYVTFILPATCTLVNA) is a signal peptide. Cystine bridges form between cysteine 29–cysteine 57, cysteine 36–cysteine 50, and cysteine 40–cysteine 58.

This sequence belongs to the beta-defensin family. Expressed in epididymis, predominantly in the caput (at protein level).

It localises to the secreted. Functionally, has a salt-sensitive antimicrobial activity against Gram-negative bacteria, including E.coli, Gram-positive, including S.aureus, and fungi, including C.albicans. Binds to and neutralizes bacterial lipopolysaccharides (LPS), abolishing TNF production by macrophages challenged with LPS. Rescues the LPS-induced reduction of sperm motility in vitro and may protect from LPS-induced lethality. The polypeptide is Beta-defensin 114 (DEFB114) (Homo sapiens (Human)).